The primary structure comprises 706 residues: Envelope glycoprotein H (706 aa).

Residues 1–18 form the signal peptide; it reads MQLLCVFCLVLLWEVGAA. Topologically, residues 19-682 are virion surface; it reads SLSEVKLHLD…LYEERAHVVL (664 aa). The N-linked (GlcNAc...) asparagine; by host glycan is linked to Asn-60. The segment at 165–229 is interaction with gL; that stretch reads DKFQYTGAMT…QSGDYSLVIV (65 aa). An intrachain disulfide couples Cys-278 to Cys-335. An N-linked (GlcNAc...) asparagine; by host glycan is attached at Asn-435. 2 disulfide bridges follow: Cys-454–Cys-478 and Cys-534–Cys-587. Asn-549 and Asn-604 each carry an N-linked (GlcNAc...) asparagine; by host glycan. Cys-612 and Cys-615 are oxidised to a cystine. A glycan (N-linked (GlcNAc...) asparagine; by host) is linked at Asn-664. Residues 683–703 form a helical membrane-spanning segment; the sequence is AIILYFIAFALGIFLVHKIVM. The Intravirion segment spans residues 704–706; that stretch reads FFL.

It belongs to the herpesviridae glycoprotein H family. Interacts with glycoprotein L (gL); this interaction is necessary for the correct processing and cell surface expression of gH. The heterodimer gH/gL seems to interact with gB trimers during fusion. The heterodimer gH/gL interacts with host EPHA2 to facilitate virus internalization and fusion. Interacts with glycoprotein 42/BZLF2. N-glycosylated, O-glycosylated, and sialylated.

It is found in the virion membrane. Its subcellular location is the host cell membrane. It localises to the host endosome membrane. Its function is as follows. The heterodimer glycoprotein H-glycoprotein L is required for the fusion of viral and plasma membranes leading to virus entry into the host cell. Following initial binding to host receptor, membrane fusion is mediated by the fusion machinery composed of gB and the heterodimer gH/gL. May also be involved in the fusion between the virion envelope and the outer nuclear membrane during virion morphogenesis. The heterodimer gH/gL targets also host EPHA2 to promote viral entry. This Homo sapiens (Human) protein is Envelope glycoprotein H.